A 103-amino-acid chain; its full sequence is Small ribosomal subunit protein uS10 (103 aa).

Belongs to the universal ribosomal protein uS10 family. As to quaternary structure, part of the 30S ribosomal subunit.

Involved in the binding of tRNA to the ribosomes. In Shewanella baltica (strain OS223), this protein is Small ribosomal subunit protein uS10.